The following is a 309-amino-acid chain: uncharacterized protein (309 aa).

3 Solcar repeats span residues 6–83 (SDLY…LCHS), 97–211 (LTGY…FKRL), and 216–302 (NDKA…VSLL). The next 6 helical transmembrane spans lie at 12–32 (ITAG…FEYL), 47–67 (IILP…VAAF), 100–120 (YNLL…IIPF), 184–204 (VQGT…QFTA), 222–242 (VITG…IDVV), and 285–305 (VGIS…LLGF).

Belongs to the mitochondrial carrier (TC 2.A.29) family.

It localises to the mitochondrion inner membrane. This is an uncharacterized protein from Saccharomyces cerevisiae (strain ATCC 204508 / S288c) (Baker's yeast).